The sequence spans 295 residues: Pantothenate synthetase (295 aa).

30–37 lines the ATP pocket; the sequence is MGNLHDGH. His-37 functions as the Proton donor in the catalytic mechanism. Gln-61 contributes to the (R)-pantoate binding site. Gln-61 is a binding site for beta-alanine. 149–152 serves as a coordination point for ATP; sequence GEKD. Gln-155 contacts (R)-pantoate. ATP is bound by residues Val-178 and 186-189; that span reads MSSR.

Belongs to the pantothenate synthetase family. As to quaternary structure, homodimer.

The protein resides in the cytoplasm. It catalyses the reaction (R)-pantoate + beta-alanine + ATP = (R)-pantothenate + AMP + diphosphate + H(+). The protein operates within cofactor biosynthesis; (R)-pantothenate biosynthesis; (R)-pantothenate from (R)-pantoate and beta-alanine: step 1/1. Its function is as follows. Catalyzes the condensation of pantoate with beta-alanine in an ATP-dependent reaction via a pantoyl-adenylate intermediate. The protein is Pantothenate synthetase of Photobacterium profundum (strain SS9).